Reading from the N-terminus, the 334-residue chain is Cytosolic Fe-S cluster assembly factor NUBP1 homolog (334 aa).

The segment at 1-24 is disordered; it reads MSSAEVTAAAKPADAPEHCPGTAS. [4Fe-4S] cluster is bound by residues Cys-19, Cys-33, Cys-36, and Cys-42. 72–79 is a binding site for ATP; sequence GKGGVGKS. Cys-247 and Cys-250 together coordinate [4Fe-4S] cluster.

The protein belongs to the Mrp/NBP35 ATP-binding proteins family. NUBP1/NBP35 subfamily. In terms of assembly, heterotetramer of 2 NUBP1 and 2 NUBP2 chains. The cofactor is [4Fe-4S] cluster.

The protein localises to the cytoplasm. In terms of biological role, component of the cytosolic iron-sulfur (Fe/S) protein assembly (CIA) machinery. Required for maturation of extramitochondrial Fe-S proteins. The NUBP1-NUBP2 heterotetramer forms a Fe-S scaffold complex, mediating the de novo assembly of an Fe-S cluster and its transfer to target apoproteins. In Culex quinquefasciatus (Southern house mosquito), this protein is Cytosolic Fe-S cluster assembly factor NUBP1 homolog.